The following is a 485-amino-acid chain: Probable glycine dehydrogenase (decarboxylating) subunit 2 (485 aa).

An N6-(pyridoxal phosphate)lysine modification is found at lysine 273.

This sequence belongs to the GcvP family. C-terminal subunit subfamily. The glycine cleavage system is composed of four proteins: P, T, L and H. In this organism, the P 'protein' is a heterodimer of two subunits. The cofactor is pyridoxal 5'-phosphate.

The catalysed reaction is N(6)-[(R)-lipoyl]-L-lysyl-[glycine-cleavage complex H protein] + glycine + H(+) = N(6)-[(R)-S(8)-aminomethyldihydrolipoyl]-L-lysyl-[glycine-cleavage complex H protein] + CO2. The glycine cleavage system catalyzes the degradation of glycine. The P protein binds the alpha-amino group of glycine through its pyridoxal phosphate cofactor; CO(2) is released and the remaining methylamine moiety is then transferred to the lipoamide cofactor of the H protein. The protein is Probable glycine dehydrogenase (decarboxylating) subunit 2 of Bacillus licheniformis (strain ATCC 14580 / DSM 13 / JCM 2505 / CCUG 7422 / NBRC 12200 / NCIMB 9375 / NCTC 10341 / NRRL NRS-1264 / Gibson 46).